Consider the following 99-residue polypeptide: Ubiquitin-related modifier 1 homolog (99 aa).

Glycine 99 carries the 1-thioglycine modification. Residue glycine 99 forms a Glycyl lysine isopeptide (Gly-Lys) (interchain with K-? in acceptor proteins) linkage.

Belongs to the URM1 family. As to quaternary structure, interacts with cer. C-terminal thiocarboxylation occurs in 2 steps, it is first acyl-adenylated (-COAMP) via the hesA/moeB/thiF part of the MOCS3 homolog, then thiocarboxylated (-COSH) via the rhodanese domain of the MOCS3 homolog.

It localises to the cytoplasm. It functions in the pathway tRNA modification; 5-methoxycarbonylmethyl-2-thiouridine-tRNA biosynthesis. In terms of biological role, acts as a sulfur carrier required for 2-thiolation of mcm(5)S(2)U at tRNA wobble positions of cytosolic tRNA(Lys), tRNA(Glu) and tRNA(Gln). Serves as sulfur donor in tRNA 2-thiolation reaction by being thiocarboxylated (-COSH) at its C-terminus by MOCS3. The sulfur is then transferred to tRNA to form 2-thiolation of mcm(5)S(2)U. Also acts as a ubiquitin-like protein (UBL) that is covalently conjugated via an isopeptide bond to lysine residues of target proteins such as Prx2/Jafrac1, Ciao1, Eip71CD and GILT1. The thiocarboxylated form serves as substrate for conjugation and oxidative stress specifically induces the formation of UBL-protein conjugates. This Drosophila virilis (Fruit fly) protein is Ubiquitin-related modifier 1 homolog.